The primary structure comprises 345 residues: Succinylglutamate desuccinylase (345 aa).

The Zn(2+) site is built by His-64, Glu-67, and His-161. Glu-225 is a catalytic residue.

The protein belongs to the AspA/AstE family. Succinylglutamate desuccinylase subfamily. Zn(2+) is required as a cofactor.

The enzyme catalyses N-succinyl-L-glutamate + H2O = L-glutamate + succinate. It functions in the pathway amino-acid degradation; L-arginine degradation via AST pathway; L-glutamate and succinate from L-arginine: step 5/5. Its function is as follows. Transforms N(2)-succinylglutamate into succinate and glutamate. The polypeptide is Succinylglutamate desuccinylase (Shewanella pealeana (strain ATCC 700345 / ANG-SQ1)).